The sequence spans 371 residues: Probable inactive methyltransferase Os04g0175900 (371 aa).

A substrate-binding site is contributed by 137 to 143; it reads LDVDEDN. Residues 170–188 form a substrate binding region; it reads LFEYMGTNHRFNMLFNQAM. S-adenosyl-L-methionine is bound by residues Gly-216, Asp-239, Met-260, and Lys-273.

The protein belongs to the class I-like SAM-binding methyltransferase superfamily. Cation-independent O-methyltransferase family. COMT subfamily.

In Oryza sativa subsp. japonica (Rice), this protein is Probable inactive methyltransferase Os04g0175900.